We begin with the raw amino-acid sequence, 113 residues long: Cytochrome c (113 aa).

A1 carries the N-acetylalanine modification. Heme c-binding residues include C22, C25, and H26. The residue at position 80 (K80) is an N6,N6,N6-trimethyllysine. M88 serves as a coordination point for heme c. K94 is modified (N6,N6,N6-trimethyllysine).

It belongs to the cytochrome c family. Post-translationally, binds 1 heme c group covalently per subunit.

It localises to the mitochondrion intermembrane space. Its function is as follows. Electron carrier protein. The oxidized form of the cytochrome c heme group can accept an electron from the heme group of the cytochrome c1 subunit of cytochrome reductase. Cytochrome c then transfers this electron to the cytochrome oxidase complex, the final protein carrier in the mitochondrial electron-transport chain. This Ginkgo biloba (Ginkgo) protein is Cytochrome c.